The chain runs to 236 residues: Regulatory protein cys-3 (236 aa).

The tract at residues 26–89 (TLGQLQPIQP…MSVPPTPGAR (64 aa)) is disordered. The segment covering 28–37 (GQLQPIQPNP) has biased composition (polar residues). Positions 99–162 (LAAEEDKRKR…KWLKGLVTEK (64 aa)) constitute a bZIP domain. Residues 105 to 137 (KRKRNTAASARFRIKKKQREQALEKSAKEMSEK) are basic motif. Residues 141-155 (LEGRIQALETENKWL) are leucine-zipper. The tract at residues 189–236 (AAAADKAEAAADKADAERAREESSFCVSTSSPSSDESVDTDNKKRRKD) is disordered. Basic and acidic residues predominate over residues 193–211 (DKAEAAADKADAERAREES). Over residues 212-223 (SFCVSTSSPSSD) the composition is skewed to low complexity.

The protein belongs to the bZIP family. GCN4 subfamily. Binds DNA as a dimer.

Its subcellular location is the nucleus. Functionally, turns on the expression of structural genes which encode sulfur-catabolic enzymes. Binds to sequence elements upstream of these genes. The polypeptide is Regulatory protein cys-3 (cys-3) (Neurospora crassa (strain ATCC 24698 / 74-OR23-1A / CBS 708.71 / DSM 1257 / FGSC 987)).